We begin with the raw amino-acid sequence, 431 residues long: 5-methylthioadenosine/S-adenosylhomocysteine deaminase (431 aa).

Positions 60 and 62 each coordinate Zn(2+). Substrate contacts are provided by Glu89 and His182. Position 209 (His209) interacts with Zn(2+). Residues Glu212 and Asp297 each coordinate substrate. Asp297 is a Zn(2+) binding site.

This sequence belongs to the metallo-dependent hydrolases superfamily. MTA/SAH deaminase family. It depends on Zn(2+) as a cofactor.

The enzyme catalyses S-adenosyl-L-homocysteine + H2O + H(+) = S-inosyl-L-homocysteine + NH4(+). It carries out the reaction S-methyl-5'-thioadenosine + H2O + H(+) = S-methyl-5'-thioinosine + NH4(+). Catalyzes the deamination of 5-methylthioadenosine and S-adenosyl-L-homocysteine into 5-methylthioinosine and S-inosyl-L-homocysteine, respectively. Is also able to deaminate adenosine. The sequence is that of 5-methylthioadenosine/S-adenosylhomocysteine deaminase from Natronomonas pharaonis (strain ATCC 35678 / DSM 2160 / CIP 103997 / JCM 8858 / NBRC 14720 / NCIMB 2260 / Gabara) (Halobacterium pharaonis).